The sequence spans 432 residues: Pachytene checkpoint protein 2 homolog (432 aa).

Met1 bears the N-acetylmethionine mark. An ATP-binding site is contributed by 179-186; that stretch reads GPPGTGKT.

It belongs to the AAA ATPase family. PCH2 subfamily. As to quaternary structure, specifically interacts with the ligand binding domain of the thyroid receptor (TR). This interaction does not require the presence of thyroid hormone for its interaction. Interacts with proteasome subunit PSMA8; to participate in meiosis progression during spermatogenesis.

Plays a key role in chromosome recombination and chromosome structure development during meiosis. Required at early steps in meiotic recombination that leads to non-crossovers pathways. Also needed for efficient completion of homologous synapsis by influencing crossover distribution along the chromosomes affecting both crossovers and non-crossovers pathways. Also required for development of higher-order chromosome structures and is needed for synaptonemal-complex formation. In males, required for efficient synapsis of the sex chromosomes and for sex body formation. Promotes early steps of the DNA double-strand breaks (DSBs) repair process upstream of the assembly of RAD51 complexes. Required for depletion of HORMAD1 and HORMAD2 from synapsed chromosomes. Plays a role in mitotic spindle assembly checkpoint (SAC) activation. The protein is Pachytene checkpoint protein 2 homolog (Trip13) of Rattus norvegicus (Rat).